The sequence spans 127 residues: Probable 4-amino-4-deoxy-L-arabinose-phosphoundecaprenol flippase subunit ArnF (127 aa).

The Cytoplasmic segment spans residues 1–2 (MG). The helical transmembrane segment at 3–23 (LLFALGSVVLVSAAQLLLKWA) threads the bilayer. At 24–47 (MIQLPDISQLPQFLSSLSQFPLPT) the chain is on the periplasmic side. A helical membrane pass occupies residues 48-68 (AALFLGLLAYALSMLCWLLAL). Topologically, residues 69–76 (KRLPLSRA) are cytoplasmic. A helical membrane pass occupies residues 77–97 (YPLLSLSYLLVWLAALWLPGL). At 98-102 (NEVFR) the chain is on the periplasmic side. A helical transmembrane segment spans residues 103–123 (WGKLAGAGLIVSGLLLICWPA). Over 124–127 (AKTR) the chain is Cytoplasmic.

This sequence belongs to the ArnF family. Heterodimer of ArnE and ArnF.

It is found in the cell inner membrane. Its pathway is bacterial outer membrane biogenesis; lipopolysaccharide biosynthesis. Functionally, translocates 4-amino-4-deoxy-L-arabinose-phosphoundecaprenol (alpha-L-Ara4N-phosphoundecaprenol) from the cytoplasmic to the periplasmic side of the inner membrane. The polypeptide is Probable 4-amino-4-deoxy-L-arabinose-phosphoundecaprenol flippase subunit ArnF (Erwinia tasmaniensis (strain DSM 17950 / CFBP 7177 / CIP 109463 / NCPPB 4357 / Et1/99)).